The primary structure comprises 500 residues: ATP synthase subunit alpha (500 aa).

169–176 serves as a coordination point for ATP; sequence GDRQTGKT.

This sequence belongs to the ATPase alpha/beta chains family. F-type ATPases have 2 components, CF(1) - the catalytic core - and CF(0) - the membrane proton channel. CF(1) has five subunits: alpha(3), beta(3), gamma(1), delta(1), epsilon(1). CF(0) has three main subunits: a(1), b(2) and c(9-12). The alpha and beta chains form an alternating ring which encloses part of the gamma chain. CF(1) is attached to CF(0) by a central stalk formed by the gamma and epsilon chains, while a peripheral stalk is formed by the delta and b chains.

It localises to the cell membrane. The enzyme catalyses ATP + H2O + 4 H(+)(in) = ADP + phosphate + 5 H(+)(out). In terms of biological role, produces ATP from ADP in the presence of a proton gradient across the membrane. The alpha chain is a regulatory subunit. This chain is ATP synthase subunit alpha, found in Lactococcus lactis subsp. cremoris (strain SK11).